Here is a 391-residue protein sequence, read N- to C-terminus: S-adenosylmethionine synthase (391 aa).

Residue His19 coordinates ATP. Asp21 serves as a coordination point for Mg(2+). A K(+)-binding site is contributed by Glu47. Glu60 and Gln103 together coordinate L-methionine. The tract at residues 103–113 (QSADIAQGVDR) is flexible loop. ATP is bound by residues 168–170 (DGK), 236–237 (RF), Asp245, 251–252 (RK), Ala268, and Lys272. Asp245 contacts L-methionine. Residue Lys276 participates in L-methionine binding.

The protein belongs to the AdoMet synthase family. Homotetramer; dimer of dimers. Requires Mg(2+) as cofactor. K(+) serves as cofactor.

The protein localises to the cytoplasm. The enzyme catalyses L-methionine + ATP + H2O = S-adenosyl-L-methionine + phosphate + diphosphate. The protein operates within amino-acid biosynthesis; S-adenosyl-L-methionine biosynthesis; S-adenosyl-L-methionine from L-methionine: step 1/1. Catalyzes the formation of S-adenosylmethionine (AdoMet) from methionine and ATP. The overall synthetic reaction is composed of two sequential steps, AdoMet formation and the subsequent tripolyphosphate hydrolysis which occurs prior to release of AdoMet from the enzyme. The chain is S-adenosylmethionine synthase from Nitratidesulfovibrio vulgaris (strain ATCC 29579 / DSM 644 / CCUG 34227 / NCIMB 8303 / VKM B-1760 / Hildenborough) (Desulfovibrio vulgaris).